Reading from the N-terminus, the 381-residue chain is Protein-glutamate methylesterase/protein-glutamine glutaminase 1 (381 aa).

The 119-residue stretch at Arg14–Ser132 folds into the Response regulatory domain. Asp65 carries the 4-aspartylphosphate modification. Residues Gln143–Val173 are disordered. Low complexity predominate over residues Ala144–Arg153. Positions Pro188 to Arg381 constitute a CheB-type methylesterase domain. Residues Ser199, His227, and Asp323 contribute to the active site.

This sequence belongs to the CheB family. Post-translationally, phosphorylated by CheA. Phosphorylation of the N-terminal regulatory domain activates the methylesterase activity.

Its subcellular location is the cytoplasm. The catalysed reaction is [protein]-L-glutamate 5-O-methyl ester + H2O = L-glutamyl-[protein] + methanol + H(+). The enzyme catalyses L-glutaminyl-[protein] + H2O = L-glutamyl-[protein] + NH4(+). In terms of biological role, involved in chemotaxis. Part of a chemotaxis signal transduction system that modulates chemotaxis in response to various stimuli. Catalyzes the demethylation of specific methylglutamate residues introduced into the chemoreceptors (methyl-accepting chemotaxis proteins or MCP) by CheR. Also mediates the irreversible deamidation of specific glutamine residues to glutamic acid. The protein is Protein-glutamate methylesterase/protein-glutamine glutaminase 1 of Paramagnetospirillum magneticum (strain ATCC 700264 / AMB-1) (Magnetospirillum magneticum).